A 176-amino-acid polypeptide reads, in one-letter code: Mitochondrial inner membrane protein Mpv17 (176 aa).

A run of 4 helical transmembrane segments spans residues 18-38 (VQVL…QQLV), 53-73 (TMAS…YRVL), 94-114 (GGFA…LNGL), and 131-151 (LITN…LVPL).

This sequence belongs to the peroxisomal membrane protein PXMP2/4 family.

It is found in the mitochondrion inner membrane. Functionally, non-selective channel that modulates the membrane potential under normal conditions and oxidative stress, and is involved in mitochondrial homeostasis. Involved in mitochondrial deoxynucleoside triphosphates (dNTP) pool homeostasis and mitochondrial DNA (mtDNA) maintenance. May be involved in the regulation of reactive oxygen species metabolism and the control of oxidative phosphorylation. The chain is Mitochondrial inner membrane protein Mpv17 from Bos taurus (Bovine).